A 253-amino-acid polypeptide reads, in one-letter code: Adenosylcobinamide-GDP ribazoletransferase (253 aa).

4 helical membrane passes run 33 to 53 (ISPLIIGISLALIESAVYVLL), 106 to 126 (IGSGGIGLLLVYLSIQIVALL), 132 to 152 (FYTIFHLISSNVLSMTIGLYI), and 178 to 198 (VLLLELIPFISLYNIIVFLVF).

It belongs to the CobS family. It depends on Mg(2+) as a cofactor.

It is found in the cell membrane. It carries out the reaction alpha-ribazole + adenosylcob(III)inamide-GDP = adenosylcob(III)alamin + GMP + H(+). The catalysed reaction is alpha-ribazole 5'-phosphate + adenosylcob(III)inamide-GDP = adenosylcob(III)alamin 5'-phosphate + GMP + H(+). It functions in the pathway cofactor biosynthesis; adenosylcobalamin biosynthesis; adenosylcobalamin from cob(II)yrinate a,c-diamide: step 7/7. Joins adenosylcobinamide-GDP and alpha-ribazole to generate adenosylcobalamin (Ado-cobalamin). Also synthesizes adenosylcobalamin 5'-phosphate from adenosylcobinamide-GDP and alpha-ribazole 5'-phosphate. This chain is Adenosylcobinamide-GDP ribazoletransferase, found in Saccharolobus islandicus (strain Y.G.57.14 / Yellowstone #1) (Sulfolobus islandicus).